The following is a 2629-amino-acid chain: Protein DOP1 homolog (2629 aa).

7 disordered regions span residues Asn561 to Asn584, Ser605 to Ser652, Ala688 to Tyr710, Met1278 to Ala1340, Thr1371 to His1395, Ile1435 to Ser1471, and Arg1766 to Arg1785. Composition is skewed to polar residues over residues Ser605–Ser615 and Ala636–Leu647. Positions Asp1307–Asp1320 are enriched in acidic residues. Residues Ser1321–Ser1333 are compositionally biased toward basic and acidic residues. Polar residues-rich tracts occupy residues Gly1381–Asp1391 and Ile1435–Gln1450.

This sequence belongs to the DOP1 family.

It is found in the golgi apparatus membrane. Functionally, may be involved in protein traffic between late Golgi and early endosomes. This Drosophila pseudoobscura pseudoobscura (Fruit fly) protein is Protein DOP1 homolog.